Consider the following 948-residue polypeptide: Protocadherin alpha-2 (948 aa).

The N-terminal stretch at 1–22 (MASSIRRGLGAWTRLLSLLLLA) is a signal peptide. At 23 to 697 (AWEVGSGQLR…GSEATLVDVN (675 aa)) the chain is on the extracellular side. 6 Cadherin domains span residues 30-133 (QLRY…PPVF), 157-242 (ASDA…EPTF), 243-350 (AQSV…TPEV), 351-455 (SITS…APAF), 456-565 (AQPE…APAL), and 588-678 (GHVV…APKA). Residues N257, N265, N362, and N548 are each glycosylated (N-linked (GlcNAc...) asparagine). A helical transmembrane segment spans residues 698-718 (VYLIIAICAVSSLLVLTVLLY). The Cytoplasmic segment spans residues 719-948 (TALRCSVPAT…GNSTTDNSDQ (230 aa)). The stretch at 734-737 (PGKP) is one PXXP 1 repeat. A 5 X 4 AA repeats of P-X-X-P region spans residues 734–892 (PGKPTLVCSS…PDKFIIPGSP (159 aa)). 3 disordered regions span residues 755 to 801 (RQRV…RQPN), 829 to 854 (GPGG…EVSP), and 868 to 948 (KYGP…NSDQ). Positions 783–795 (AEEKQLSESEYVG) are enriched in basic and acidic residues. 4 PXXP repeats span residues 797 to 800 (PRQP), 830 to 833 (PGGP), 871 to 874 (PGNP), and 889 to 892 (PGSP). Residues 907 to 921 (DKSDFITFGKKEETK) show a composition bias toward basic and acidic residues.

It is found in the cell membrane. Its function is as follows. Potential calcium-dependent cell-adhesion protein. May be involved in the establishment and maintenance of specific neuronal connections in the brain. This chain is Protocadherin alpha-2 (PCDHA2), found in Pan troglodytes (Chimpanzee).